Here is a 156-residue protein sequence, read N- to C-terminus: Small ribosomal subunit protein uS7 (156 aa).

It belongs to the universal ribosomal protein uS7 family. In terms of assembly, part of the 30S ribosomal subunit. Contacts proteins S9 and S11.

In terms of biological role, one of the primary rRNA binding proteins, it binds directly to 16S rRNA where it nucleates assembly of the head domain of the 30S subunit. Is located at the subunit interface close to the decoding center, probably blocks exit of the E-site tRNA. The protein is Small ribosomal subunit protein uS7 of Clostridium botulinum (strain Okra / Type B1).